We begin with the raw amino-acid sequence, 438 residues long: GDP-mannose 6-dehydrogenase (438 aa).

6 residues coordinate NAD(+): tyrosine 10, valine 11, aspartate 30, lysine 35, threonine 86, and threonine 124. GDP-alpha-D-mannuronate-binding residues include glutamate 161, lysine 210, asparagine 214, histidine 217, asparagine 225, tyrosine 256, tyrosine 257, arginine 259, phenylalanine 262, and glycine 265. Cysteine 268 is a catalytic residue. Residue lysine 271 coordinates NAD(+). Lysine 324 contributes to the GDP-alpha-D-mannuronate binding site. Residue arginine 331 participates in NAD(+) binding.

Belongs to the UDP-glucose/GDP-mannose dehydrogenase family.

The enzyme catalyses GDP-alpha-D-mannose + 2 NAD(+) + H2O = GDP-alpha-D-mannuronate + 2 NADH + 3 H(+). It functions in the pathway glycan biosynthesis; alginate biosynthesis. Catalyzes the oxidation of guanosine diphospho-D-mannose (GDP-D-mannose) to GDP-D-mannuronic acid, a precursor for alginate polymerization. The alginate layer causes a mucoid phenotype and provides a protective barrier against host immune defenses and antibiotics. The protein is GDP-mannose 6-dehydrogenase (algD) of Pseudomonas savastanoi pv. phaseolicola (Pseudomonas syringae pv. phaseolicola).